A 1795-amino-acid chain; its full sequence is Protein TIC 214 (1795 aa).

The next 6 membrane-spanning stretches (helical) occupy residues 19–39 (IINS…FSIG), 68–88 (FIAG…HLAL), 91–111 (PHTI…WNNH), 133–153 (VFLN…SSML), 176–196 (VGWL…LVWI), and 227–247 (IFSI…PSPI). The interval 1490 to 1517 (EKESTGQVEFESDKEQQRNSESALSNQE) is disordered. The span at 1508–1517 (NSESALSNQE) shows a compositional bias: polar residues.

Belongs to the TIC214 family. Part of the Tic complex.

The protein resides in the plastid. The protein localises to the chloroplast inner membrane. Functionally, involved in protein precursor import into chloroplasts. May be part of an intermediate translocation complex acting as a protein-conducting channel at the inner envelope. The polypeptide is Protein TIC 214 (Crucihimalaya wallichii (Rock-cress)).